A 280-amino-acid chain; its full sequence is MIILDGKKLSQKDTIFLKEKVNQFKIKPVFTIVQVGNLFSSNKYIKTKMDKALEIGVVSRLIKIPESISEKDLISIIEEESKISHGLIVQLPLPLQFDQSKILNSVPITKDIDGLSEKNSKNLYSGKSCIQPATARGIIDLIKEYNFTIKDKKVYVIGESNLVGKPIKELFKQAGAIVKSFNINTGIKGSEEADILIVAAGHPNLVKPENVKNNSIVIDVGINSIGENDKMIVTGDVDFSNVKTKVKAISPVPGGVGPMTVISLFKNLIEIFEKYLLDDN.

NADP(+) is bound by residues 158-160, I183, and I222; that span reads GES.

The protein belongs to the tetrahydrofolate dehydrogenase/cyclohydrolase family. Homodimer.

It catalyses the reaction (6R)-5,10-methylene-5,6,7,8-tetrahydrofolate + NADP(+) = (6R)-5,10-methenyltetrahydrofolate + NADPH. The catalysed reaction is (6R)-5,10-methenyltetrahydrofolate + H2O = (6R)-10-formyltetrahydrofolate + H(+). It functions in the pathway one-carbon metabolism; tetrahydrofolate interconversion. Catalyzes the oxidation of 5,10-methylenetetrahydrofolate to 5,10-methenyltetrahydrofolate and then the hydrolysis of 5,10-methenyltetrahydrofolate to 10-formyltetrahydrofolate. This is Bifunctional protein FolD from Mycoplasma mobile (strain ATCC 43663 / 163K / NCTC 11711) (Mesomycoplasma mobile).